Here is a 260-residue protein sequence, read N- to C-terminus: Taurine import ATP-binding protein TauB (260 aa).

The ABC transporter domain occupies 6–235; that stretch reads AQQVSVVYAS…RYAHGEPVRS (230 aa). Position 40–47 (40–47) interacts with ATP; sequence GASGCGKS.

This sequence belongs to the ABC transporter superfamily. Taurine importer (TC 3.A.1.17.1) family. The complex is composed of two ATP-binding proteins (TauB), two transmembrane proteins (TauC) and a solute-binding protein (TauA).

It is found in the cell inner membrane. It catalyses the reaction taurine(out) + ATP + H2O = taurine(in) + ADP + phosphate + H(+). Functionally, part of the ABC transporter complex TauABC involved in taurine import. Responsible for energy coupling to the transport system. This is Taurine import ATP-binding protein TauB from Burkholderia pseudomallei (strain K96243).